The primary structure comprises 443 residues: Adenylyltransferase and sulfurtransferase UBA4 (443 aa).

Residues Gly81, Asp102, 109–113 (SNLHR), Lys126, and 170–171 (DS) each bind ATP. Zn(2+) contacts are provided by Cys212 and Cys215. The active-site Glycyl thioester intermediate; for adenylyltransferase activity is Cys229. Zn(2+)-binding residues include Cys290 and Cys293. The region spanning 342-441 (KERGFVCLDV…YIDEINPSLP (100 aa)) is the Rhodanese domain. Residue Cys400 is the Cysteine persulfide intermediate; for sulfurtransferase activity of the active site.

In the N-terminal section; belongs to the HesA/MoeB/ThiF family. UBA4 subfamily. Requires Zn(2+) as cofactor.

The protein resides in the cytoplasm. The protein localises to the cytosol. It functions in the pathway tRNA modification; 5-methoxycarbonylmethyl-2-thiouridine-tRNA biosynthesis. Plays a central role in 2-thiolation of mcm(5)S(2)U at tRNA wobble positions of cytosolic tRNA(Lys), tRNA(Glu) and tRNA(Gln). Acts by mediating the C-terminal thiocarboxylation of sulfur carrier URM1. Its N-terminus first activates URM1 as acyl-adenylate (-COAMP), then the persulfide sulfur on the catalytic cysteine is transferred to URM1 to form thiocarboxylation (-COSH) of its C-terminus. The reaction probably involves hydrogen sulfide that is generated from the persulfide intermediate and that acts as a nucleophile towards URM1. Subsequently, a transient disulfide bond is formed. Does not use thiosulfate as sulfur donor; NFS1 probably acting as a sulfur donor for thiocarboxylation reactions. Prior mcm(5) tRNA modification by the elongator complex is required for 2-thiolation. May also be involved in protein urmylation. This is Adenylyltransferase and sulfurtransferase UBA4 from Eremothecium gossypii (strain ATCC 10895 / CBS 109.51 / FGSC 9923 / NRRL Y-1056) (Yeast).